The following is a 385-amino-acid chain: Sensor histidine kinase Hik2 (385 aa).

The 121-residue stretch at 11 to 131 (ALCRTQLELV…QQVAQTLAIA (121 aa)) folds into the GAF domain. Cys13 contacts [3Fe-4S] cluster. The tract at residues 142–270 (SHSPAQPLDQ…PQLPPIWLEE (129 aa)) is DHp domain, may sense NaCl. Residues 158–381 (DLLHQLRNPV…AFTLAIPWQM (224 aa)) form the Histidine kinase domain. At His161 the chain carries Phosphohistidine; by autocatalysis.

The protein belongs to the chloroplast sensor kinase protein family. Hexamers; upon treatment with 0.5 M NaCl only tetramers are seen. The tetramers are probably inactive. Requires [3Fe-4S] cluster as cofactor. Autophosphorylates, possibly on His-161.

The catalysed reaction is ATP + protein L-histidine = ADP + protein N-phospho-L-histidine.. Member of 2 two-component regulatory system(s) Hik2/Rre1 and Hik2/RppA. Transduces PQ (plastoquinone) redox signals to photosystem gene expression machinery during the adjustment of photosystem stoichiometry. Reduced PQ suppresses its autophosphorylation activity (i.e. kinase activity is higher under oxidizing conditions). As part of a two-component regulatory system with Rre1, controls expression of sigB and several other genes in response to hyperosmotic stress. May transfer phosphate to RppA in a possible Hik2/RppA two-component system. In Thermosynechococcus vestitus (strain NIES-2133 / IAM M-273 / BP-1), this protein is Sensor histidine kinase Hik2.